Consider the following 472-residue polypeptide: MSQTPAVSRRLLLGSAAATGALATGIGSAAPVAAAEQAPRRRPGQKSMIGVPFAAHPTVRVAVIGLGNRGGGMITGWAAVPGCTVTAVCDIRADRAERAADRLESKGNPRPAEYGGSADSYARMLRRDDIDLVYIATPWEFHYEHGRAALLSGRHAVVELPVATELRQLWDLVDTSERTRRHLLLSENCNYGRNELAMLKAAHDGLFGDLTNGHGGYLHDLRELLFSDTYYTDSWRRLWHTRSTASFYPMHGLAPIAAAMDVNRGDRMTTLRATTTAPKGLADYRARFVPRDHPSWKETYINGDLVTCMIETAKGRTVRAEHDVSSPRPYSRINTLAGSRGIVEDYAGSAPTGARIYVEPDHGGHTWRDFETYRKEYDHWLWQKVGDDAANNGGHGGMDYVLQWRTVQLMRAGLVPDIDVYDSAAWCSPVPLSVTSLARGGRPVEIPDFTRGAWRERRPGLDSAPTDMPPAG.

A signal peptide (tat-type signal) is located at residues 1 to 35 (MSQTPAVSRRLLLGSAAATGALATGIGSAAPVAAA). NAD(+)-binding positions include 68–69 (NR), aspartate 90, 139–142 (WEFH), histidine 145, 159–160 (EL), and asparagine 188. Substrate is bound by residues tyrosine 217, arginine 236, 248-251 (YPMH), and tyrosine 330. An NAD(+)-binding site is contributed by tyrosine 248.

The protein belongs to the Gfo/Idh/MocA family. Glycosyl hydrolase 109 subfamily. NAD(+) serves as cofactor. Post-translationally, predicted to be exported by the Tat system. The position of the signal peptide cleavage has not been experimentally proven.

In terms of biological role, glycosidase. Has no alpha-N-acetylgalactosaminidase activity. The sequence is that of Glycosyl hydrolase family 109 protein from Streptomyces coelicolor (strain ATCC BAA-471 / A3(2) / M145).